A 318-amino-acid polypeptide reads, in one-letter code: Ribosomal RNA small subunit methyltransferase A (318 aa).

S-adenosyl-L-methionine is bound by residues Asn-40, Val-42, Gly-67, Glu-88, Asp-118, and Asn-137. Positions 296 to 305 are enriched in basic and acidic residues; it reads ADRGGSDREG. Positions 296 to 318 are disordered; the sequence is ADRGGSDREGTSPPTAGQGAPAC.

This sequence belongs to the class I-like SAM-binding methyltransferase superfamily. rRNA adenine N(6)-methyltransferase family. RsmA subfamily.

Its subcellular location is the cytoplasm. The catalysed reaction is adenosine(1518)/adenosine(1519) in 16S rRNA + 4 S-adenosyl-L-methionine = N(6)-dimethyladenosine(1518)/N(6)-dimethyladenosine(1519) in 16S rRNA + 4 S-adenosyl-L-homocysteine + 4 H(+). In terms of biological role, specifically dimethylates two adjacent adenosines (A1518 and A1519) in the loop of a conserved hairpin near the 3'-end of 16S rRNA in the 30S particle. May play a critical role in biogenesis of 30S subunits. The protein is Ribosomal RNA small subunit methyltransferase A of Mycobacterium avium (strain 104).